Consider the following 200-residue polypeptide: MNDFTLNAQARTDLGKGASRRLRHAANIPAVVYGGNKPAESVTILSKEIAKLFENEAAYSHVIELNVDGTKQNVIVKAMQRHPSKQFIMHADFVRVVAGQKLTAIVPVHFVGEDAPVKKGGVVSHTATELEVTCLPKDLPEFIEVDLSAAEIGTIIHLSDLKAPKGVEFVALAHNDDKAVANVHAPRVVAEDEEGETAAE.

It belongs to the bacterial ribosomal protein bL25 family. CTC subfamily. As to quaternary structure, part of the 50S ribosomal subunit; part of the 5S rRNA/L5/L18/L25 subcomplex. Contacts the 5S rRNA. Binds to the 5S rRNA independently of L5 and L18.

Functionally, this is one of the proteins that binds to the 5S RNA in the ribosome where it forms part of the central protuberance. The sequence is that of Large ribosomal subunit protein bL25 from Pseudomonas fluorescens (strain SBW25).